The following is a 417-amino-acid chain: Exodeoxyribonuclease 7 large subunit (417 aa).

The protein belongs to the XseA family. Heterooligomer composed of large and small subunits.

The protein resides in the cytoplasm. It catalyses the reaction Exonucleolytic cleavage in either 5'- to 3'- or 3'- to 5'-direction to yield nucleoside 5'-phosphates.. Bidirectionally degrades single-stranded DNA into large acid-insoluble oligonucleotides, which are then degraded further into small acid-soluble oligonucleotides. This is Exodeoxyribonuclease 7 large subunit from Lactococcus lactis subsp. lactis (strain IL1403) (Streptococcus lactis).